The chain runs to 512 residues: Secreted triacylglycerol lipase LIP5 (512 aa).

The signal sequence occupies residues 1 to 17; sequence MMYASLVHWLALAVALA. A disulfide bridge links Cys118 with Cys292. Ser203 (nucleophile) is an active-site residue. A glycan (N-linked (GlcNAc...) asparagine) is linked at Asn316. Asp352 is an active-site residue. Asn361 carries N-linked (GlcNAc...) asparagine glycosylation. His386 is a catalytic residue. Asn453 is a glycosylation site (N-linked (GlcNAc...) asparagine). The tract at residues 480-512 is disordered; it reads KGDISPGEGGDHTKESKKAAAKFKAEKKHGKHH. Residues 488–497 are compositionally biased toward basic and acidic residues; sequence GGDHTKESKK. A compositionally biased stretch (basic residues) spans 498-512; sequence AAAKFKAEKKHGKHH.

It belongs to the AB hydrolase superfamily. Lipase family. Class Lip subfamily.

The protein localises to the secreted. It carries out the reaction a triacylglycerol + H2O = a diacylglycerol + a fatty acid + H(+). It catalyses the reaction a monoacylglycerol + H2O = glycerol + a fatty acid + H(+). The enzyme catalyses a diacylglycerol + H2O = a monoacylglycerol + a fatty acid + H(+). Functionally, secreted lipase that hydrolyzes acylglycerol lipids such as triacylglycerols and consequently releases free fatty acid. Can hydrolyze 4-nitrophenyl palmitate to release 4-nitrophenol and palmitoic acid. Due to an absence of fatty acid synthase genes in Malassezia species, secretory lipases are essential for the yeast to generate free fatty acids from degradation of sebum and assimilate them as lipid sources for growth. Plays an essential role at the pathogen-host interface during disease progression. The chain is Secreted triacylglycerol lipase LIP5 from Malassezia restricta (strain ATCC 96810 / NBRC 103918 / CBS 7877) (Seborrheic dermatitis infection agent).